Reading from the N-terminus, the 306-residue chain is Protoheme IX farnesyltransferase (306 aa).

Transmembrane regions (helical) follow at residues 31 to 50, 55 to 77, 104 to 124, 125 to 145, 168 to 188, 218 to 235, 238 to 258, and 286 to 306; these read VIEL…QGGW, LILG…NCYI, LVFA…ISNW, LAAA…TLWL, WAAV…IVFL, GRAA…ATLA, LLLI…LAGG, and ASIS…LLPF.

The protein belongs to the UbiA prenyltransferase family. Protoheme IX farnesyltransferase subfamily.

The protein localises to the cell membrane. It catalyses the reaction heme b + (2E,6E)-farnesyl diphosphate + H2O = Fe(II)-heme o + diphosphate. Its pathway is porphyrin-containing compound metabolism; heme O biosynthesis; heme O from protoheme: step 1/1. Functionally, converts heme B (protoheme IX) to heme O by substitution of the vinyl group on carbon 2 of heme B porphyrin ring with a hydroxyethyl farnesyl side group. In Clavibacter sepedonicus (Clavibacter michiganensis subsp. sepedonicus), this protein is Protoheme IX farnesyltransferase.